Consider the following 754-residue polypeptide: Endothelin-converting enzyme 1 (754 aa).

At 1-52 (MMSTYKRATLDEEDLVDSLSEGEVYPNGLQVNFRNFRSSQRCWATRTQVEKR) the chain is on the cytoplasmic side. Phosphothreonine is present on T9. A helical; Signal-anchor for type II membrane protein transmembrane segment spans residues 53-73 (LIVLVALLAAGLVACLTALGI). Topologically, residues 74–754 (QYRTRTPPVC…MNPRHKCEVW (681 aa)) are extracellular. The 673-residue stretch at 82 to 754 (VCLSEACVSV…MNPRHKCEVW (673 aa)) folds into the Peptidase M13 domain. 5 cysteine pairs are disulfide-bonded: C83-C88, C106-C739, C114-C699, C169-C419, and C628-C751. Residues N150, N171, N194, N254, N300, N346, N367, and N523 are each glycosylated (N-linked (GlcNAc...) asparagine). A Zn(2+)-binding site is contributed by H591. The active site involves E592. Residue H595 coordinates Zn(2+). 2 N-linked (GlcNAc...) asparagine glycosylation sites follow: N616 and N635. Residue E651 participates in Zn(2+) binding. D655 functions as the Proton donor in the catalytic mechanism.

It belongs to the peptidase M13 family. Homodimer; disulfide-linked. Interacts with PPP1R16B. Interacts with TSPAN8; this interaction recruits the endothelin converting enzyme ECE1 to tetraspanin-enriched microdomains and positively modulates its enzymatic activity. Requires Zn(2+) as cofactor.

The protein resides in the cell membrane. It carries out the reaction Hydrolysis of the 21-Trp-|-Val-22 bond in big endothelin to form endothelin 1.. With respect to regulation, inhibited by phosphoramidon. Converts big endothelin-1 to endothelin-1. In Cavia porcellus (Guinea pig), this protein is Endothelin-converting enzyme 1 (ECE1).